The primary structure comprises 196 residues: Dephospho-CoA kinase (196 aa).

A DPCK domain is found at 3–196 (RIGLTGNIGC…KVYEELTRDP (194 aa)). 11–16 (GCGKST) is a binding site for ATP.

Belongs to the CoaE family.

Its subcellular location is the cytoplasm. The catalysed reaction is 3'-dephospho-CoA + ATP = ADP + CoA + H(+). It participates in cofactor biosynthesis; coenzyme A biosynthesis; CoA from (R)-pantothenate: step 5/5. Catalyzes the phosphorylation of the 3'-hydroxyl group of dephosphocoenzyme A to form coenzyme A. The polypeptide is Dephospho-CoA kinase (Aquifex aeolicus (strain VF5)).